We begin with the raw amino-acid sequence, 406 residues long: Odorant receptor 42a (406 aa).

Residues 1 to 44 (MDLRRWFPTLYTQSKDSPVRSRDATLYLLRCVFLMGVRKPPAKF) are Cytoplasmic-facing. A helical membrane pass occupies residues 45–65 (FVAYVLWSFALNFCSTFYQPI). Over 66–86 (GFLTGYISHLSEFSPGEFLTS) the chain is Extracellular. A helical membrane pass occupies residues 87 to 107 (LQVAFNAWSCSTKVLIVWALV). Over 108-142 (KRFDEANNLLDEMDRRITDPGERLQIHRAVSLSNR) the chain is Cytoplasmic. Residues 143 to 163 (IFFFFMAVYMVYATNTFLSAI) form a helical membrane-spanning segment. Topologically, residues 164 to 181 (FIGRPPYQNYYPFLDWRS) are extracellular. A helical transmembrane segment spans residues 182–202 (STLHLALQAGLEYFAMAGACF). Residues 203–271 (QDVCVDCYPV…DCLRPVISGT (69 aa)) lie on the Cytoplasmic side of the membrane. Residues 272-292 (IFVQFLVVGLVLGFTLINIVL) traverse the membrane as a helical segment. The Extracellular portion of the chain corresponds to 293 to 298 (FANLGS). Residues 299–319 (AIAALSFMAAVLLETTPFCIL) traverse the membrane as a helical segment. The Cytoplasmic segment spans residues 320-359 (CNYLTEDCYKLADALFQSNWIDEEKRYQKTLMYFLQKLQQ). The chain crosses the membrane as a helical span at residues 360–380 (PITFMAMNVFPISVGTNISVT). At 381 to 406 (KFSFSVFTLVKQMNISEKLAKSEMEE) the chain is on the extracellular side. A glycan (N-linked (GlcNAc...) asparagine) is linked at asparagine 394.

Belongs to the insect chemoreceptor superfamily. Heteromeric odorant receptor channel (TC 1.A.69) family. Or2a subfamily. In terms of assembly, interacts with Orco. Complexes exist early in the endomembrane system in olfactory sensory neurons (OSNs), coupling these complexes to the conserved ciliary trafficking pathway.

It localises to the cell membrane. Functionally, odorant receptor which mediates acceptance or avoidance behavior, depending on its substrates. The odorant receptor repertoire encodes a large collection of odor stimuli that vary widely in identity, intensity, and duration. May form a complex with Orco to form odorant-sensing units, providing sensitive and prolonged odorant signaling and calcium permeability. Involved in the behavioral responses to butanol, ethyl acetate, propyl acetate, and pentyl acetate. Also responds to pyrazines. In Drosophila melanogaster (Fruit fly), this protein is Odorant receptor 42a (Or42a).